We begin with the raw amino-acid sequence, 572 residues long: Capsid vertex component 2 (572 aa).

The interval 1-58 (MFRPRFEPMNLPKDSNKPSTLMVLADRLNFISCAEGSSKYASKLFEGTLIDAEIMTNR) is interaction with major capsid protein/MCP.

Belongs to the herpesviridae CVC2 protein family. As to quaternary structure, heterodimerizes with CVC1. Interacts with major capsid protein/MCP and triplex capsid protein 1/TRX1 at the pentamer vertices. Interacts with the large tegument protein/LTP.

It is found in the virion. Its subcellular location is the host nucleus. In terms of biological role, capsid vertex-specific component that plays a role during viral DNA encapsidation, assuring correct genome cleavage and presumably stabilizing capsids that contain full-length viral genomes. Participates in the interaction between the capsid and the tegument through interaction with the large tegument protein/LTP. The polypeptide is Capsid vertex component 2 (Infectious laryngotracheitis virus (strain Thorne V882) (ILTV)).